A 227-amino-acid chain; its full sequence is MQKNNLKNLITTIVTNAFFNQKANFSIPLKGVIGEKRPSILIGNININFKSDSLIEVSFPYYPLLNKNYPNPSIISNIIQKALSNHLLYSSKNYSFIVNIRALPISTPYGSSLIFSKYIAIIIGSNPKIASTLWIDPKRFINLPKLQSDSIFKILGLNVPKGWKGIHISLNLIKWNSLSSRGRITNIIKGSVPLTNNSNGYDESSLAIYSKMGTIQIKVRLSYSSNL.

The protein belongs to the universal ribosomal protein uS3 family. Component of the mitochondrial small ribosomal subunit (mt-SSU). Mature yeast 74S mitochondrial ribosomes consist of a small (37S) and a large (54S) subunit. The 37S small subunit contains a 15S ribosomal RNA (15S mt-rRNA) and at least 32 different proteins. The 54S large subunit contains a 21S rRNA (21S mt-rRNA) and at least 45 different proteins. uS3m, uS4m and uS5m form the narrow entry site of the mRNA channel.

The protein resides in the mitochondrion. Functionally, essential for mitochondrial protein synthesis and required for the maturation of small ribosomal subunits. Component of the mitochondrial ribosome (mitoribosome), a dedicated translation machinery responsible for the synthesis of mitochondrial genome-encoded proteins, including at least some of the essential transmembrane subunits of the mitochondrial respiratory chain. The mitoribosomes are attached to the mitochondrial inner membrane and translation products are cotranslationally integrated into the membrane. uS3m is essential for mitochondrial protein synthesis and required for the maturation of small ribosomal subunits. This Schizosaccharomyces pombe (strain 972 / ATCC 24843) (Fission yeast) protein is Small ribosomal subunit protein uS3m (var1).